A 196-amino-acid chain; its full sequence is Small ribosomal subunit protein uS4C (196 aa).

The S4 RNA-binding domain occupies 87-149; that stretch reads CRLDNVVYRI…HRQNEMFSNN (63 aa).

The protein belongs to the universal ribosomal protein uS4 family. Part of the 30S ribosomal subunit. Contacts protein S5. The interaction surface between S4 and S5 is involved in control of translational fidelity.

Functionally, one of the primary rRNA binding proteins, it binds directly to 16S rRNA where it nucleates assembly of the body of the 30S subunit. With S5 and S12 plays an important role in translational accuracy. This is Small ribosomal subunit protein uS4C (rpsD3) from Clostridium acetobutylicum (strain ATCC 824 / DSM 792 / JCM 1419 / IAM 19013 / LMG 5710 / NBRC 13948 / NRRL B-527 / VKM B-1787 / 2291 / W).